A 525-amino-acid chain; its full sequence is GMP synthase [glutamine-hydrolyzing] (525 aa).

Positions lysine 8–asparagine 207 constitute a Glutamine amidotransferase type-1 domain. Cysteine 85 acts as the Nucleophile in catalysis. Catalysis depends on residues histidine 181 and glutamate 183. In terms of domain architecture, GMPS ATP-PPase spans tryptophan 208–arginine 400. Serine 235–serine 241 contributes to the ATP binding site.

Homodimer.

It catalyses the reaction XMP + L-glutamine + ATP + H2O = GMP + L-glutamate + AMP + diphosphate + 2 H(+). The protein operates within purine metabolism; GMP biosynthesis; GMP from XMP (L-Gln route): step 1/1. Catalyzes the synthesis of GMP from XMP. In Shewanella baltica (strain OS155 / ATCC BAA-1091), this protein is GMP synthase [glutamine-hydrolyzing].